Consider the following 273-residue polypeptide: MSLQNIIETAFENRADITPTTVTPEVKEAVLETIRQLDSGKLRVAERLGVGEWKVNEWAKKAVLLSFRIQDNEVLNDGVNKYFDKVPTKFADWSEDEFKNAGFRAVPGAVARRGSFVAKNVVLMPSYVNIGAYVDEGAMVDTWATVGSCAQIGKNVHLSGGVGIGGVLEPLQAAPTIIEDNCFIGARSEIVEGVIVEEGSVISMGVFIGQSTKIFDRTTGEIYQGRVPAGSVVVSGSMPSKDGSHSLYCAVIVKRVDAQTRAKTSVNELLRGI.

Positions 104 and 141 each coordinate substrate.

Belongs to the transferase hexapeptide repeat family. Homotrimer.

The protein localises to the cytoplasm. It carries out the reaction (S)-2,3,4,5-tetrahydrodipicolinate + succinyl-CoA + H2O = (S)-2-succinylamino-6-oxoheptanedioate + CoA. Its pathway is amino-acid biosynthesis; L-lysine biosynthesis via DAP pathway; LL-2,6-diaminopimelate from (S)-tetrahydrodipicolinate (succinylase route): step 1/3. The polypeptide is 2,3,4,5-tetrahydropyridine-2,6-dicarboxylate N-succinyltransferase (Neisseria meningitidis serogroup B (strain ATCC BAA-335 / MC58)).